Reading from the N-terminus, the 440-residue chain is Integral membrane protein GPR180 (440 aa).

An N-terminal signal peptide occupies residues Met1 to Gly22. Residues Asn105 and Asn110 are each glycosylated (N-linked (GlcNAc...) asparagine). 7 helical membrane passes run Phe173–Trp193, Met202–Ala222, Ile249–Val269, Thr284–Trp304, Leu321–Leu341, Phe360–Ile380, and Val389–Phe409.

The protein localises to the membrane. This chain is Integral membrane protein GPR180 (GPR180), found in Homo sapiens (Human).